The chain runs to 295 residues: bZIP transcription factor 60 (295 aa).

The tract at residues 101 to 154 is disordered; that stretch reads PAAADDSGKENSDLVVEKKSNDSGSEIHDDDDEEGDDDAVAKKRRRRVRNRDAA. Positions 106–127 are enriched in basic and acidic residues; that stretch reads DSGKENSDLVVEKKSNDSGSEI. Positions 128 to 138 are enriched in acidic residues; the sequence is HDDDDEEGDDD. The region spanning 140–203 is the bZIP domain; the sequence is VAKKRRRRVR…QSLRYCLQKG (64 aa). Residues 142–162 are basic motif; it reads KKRRRRVRNRDAAVRSRERKK. The segment at 168-182 is leucine-zipper; sequence LEKKSKYLERECLRL. A helical membrane pass occupies residues 224-244; the sequence is LLLGSLLWLLGVNFICLFPYM.

Belongs to the bZIP family. In terms of assembly, interacts with BZIP28. As to expression, expressed in seedlings, rosette and cauline leaves, stems, buds, flowers, siliques, immature seeds, anthers and pollen grains.

Its subcellular location is the endoplasmic reticulum membrane. It is found in the nucleus. Its function is as follows. Transcription factor involved in the unfolded protein response (UPR). Acts during endoplasmic reticulum stress (ER) by activating unfolded protein response (UPR) target genes via direct binding to the UPR element (UPRE). Plays a role in plant immunity and abiotic stress responses. The protein is bZIP transcription factor 60 of Arabidopsis thaliana (Mouse-ear cress).